Here is a 994-residue protein sequence, read N- to C-terminus: UPF0182 protein Strop_3729 (994 aa).

7 consecutive transmembrane segments (helical) span residues 18 to 38 (IGVLVGVFVLFTLLGWGVQAW), 61 to 81 (LLLFVTVGLAMAVIVGGNLWL), 110 to 130 (IGLWFATVSVVVGLFAGLSAQ), 174 to 194 (FTAVVLALLGALAVHYVFGGI), 209 to 229 (AHLSTLVAVFVLLKAVAYVLD), 260 to 280 (ILAYISVVVAIAVLVFSNAWM), and 283 to 303 (LVWPGISLALLGVSAVAIGGI). Disordered stretches follow at residues 891 to 934 (GEQA…AEAA) and 970 to 994 (FEQAAASTPAATPTAAPTGSPSPGG). Residues 897–926 (PSPPPSDDETPPSPTPTPTPTTPSVTPPPL) are compositionally biased toward pro residues.

It belongs to the UPF0182 family.

Its subcellular location is the cell membrane. In Salinispora tropica (strain ATCC BAA-916 / DSM 44818 / JCM 13857 / NBRC 105044 / CNB-440), this protein is UPF0182 protein Strop_3729.